The following is a 22-amino-acid chain: AVWQFREMIKCTIPPSDDLLDF.

Belongs to the phospholipase A2 family. Requires Ca(2+) as cofactor.

It localises to the secreted. It catalyses the reaction a 1,2-diacyl-sn-glycero-3-phosphocholine + H2O = a 1-acyl-sn-glycero-3-phosphocholine + a fatty acid + H(+). In terms of biological role, PA2 catalyzes the calcium-dependent hydrolysis of the 2-acyl groups in 3-sn-phosphoglycerides. This chain is Phospholipase A2, found in Struthio camelus (Common ostrich).